The following is an 84-amino-acid chain: Small ribosomal subunit protein bS20 (84 aa).

The protein belongs to the bacterial ribosomal protein bS20 family.

Binds directly to 16S ribosomal RNA. In Levilactobacillus brevis (strain ATCC 367 / BCRC 12310 / CIP 105137 / JCM 1170 / LMG 11437 / NCIMB 947 / NCTC 947) (Lactobacillus brevis), this protein is Small ribosomal subunit protein bS20.